Reading from the N-terminus, the 352-residue chain is C-C chemokine receptor type 5 (352 aa).

At 1 to 30 (MDYQVSSPTYDIDYYTSEPCQKVNVKQIAA) the chain is on the extracellular side. Tyr3 carries the sulfotyrosine modification. Ser6 and Ser7 each carry an O-linked (GalNAc...) serine glycan. Residues Tyr10, Tyr14, and Tyr15 each carry the sulfotyrosine modification. Cystine bridges form between Cys20/Cys269 and Cys101/Cys178. The helical transmembrane segment at 31 to 58 (RLLPPLYSLVFIFGFVGNILVVLILINC) threads the bilayer. Over 59–68 (KRLKSMTDIY) the chain is Cytoplasmic. Residues 69–89 (LLNLAISDLFFLLTVPFWAHY) traverse the membrane as a helical segment. The Extracellular portion of the chain corresponds to 90–102 (AAAQWDFGNTMCQ). A helical transmembrane segment spans residues 103 to 124 (LLTGLYFIGFFSGIFFIILLTI). Over 125–141 (DRYLAIVHAVFALKART) the chain is Cytoplasmic. The chain crosses the membrane as a helical span at residues 142–166 (VTFGVVTSVITWVVAVFASLPGIIF). At 167–198 (TRSQREGLHYTCSSHFPYSQYQFWKNFQTLKI) the chain is on the extracellular side. Residues 199–218 (VILGLVLPLLVMVICYSGIL) traverse the membrane as a helical segment. Topologically, residues 219-235 (KTLLRCRNEKKRHRAVR) are cytoplasmic. Residues 236–260 (LIFTIMIVYFLFWAPYNIVLLLNTF) form a helical membrane-spanning segment. Residues 261–277 (QEFFGLNNCSSSNRLDQ) are Extracellular-facing. Residues 278 to 301 (AMQVTETLGMTHCCINPIIYAFVG) traverse the membrane as a helical segment. The Cytoplasmic segment spans residues 302–352 (EKFRNYLLVFFQKHIAKRFCKCCYIFQQEAPERASSVYTRSTGEQEISVGL). Residues Cys321, Cys323, and Cys324 are each lipidated (S-palmitoyl cysteine). Ser336, Ser337, Ser342, and Ser349 each carry phosphoserine; by BARK1.

This sequence belongs to the G-protein coupled receptor 1 family. Interacts with PRAF2. Efficient ligand binding to CCL3/MIP-1alpha and CCL4/MIP-1beta requires sulfation, O-glycosylation and sialic acid modifications. Glycosylation on Ser-6 is required for efficient binding of CCL4. Interacts with GRK2. Interacts with ARRB1 and ARRB2. Interacts with CNIH4. Interacts with S100A4; this interaction stimulates T-lymphocyte chemotaxis. Sulfated on at least 2 of the N-terminal tyrosines. Sulfation is required for efficient binding of the chemokines, CCL3 and CCL4. Post-translationally, palmitoylation in the C-terminal is important for cell surface expression. In terms of processing, phosphorylation on serine residues in the C-terminal is stimulated by binding CC chemokines especially by APO-RANTES. O-glycosylated, but not N-glycosylated. Ser-6 appears to be the major site even if Ser-7 may be also O-glycosylated. Also sialylated glycans present which contribute to chemokine binding. Thr-16 and Ser-17 may also be glycosylated and, if so, with small moieties such as a T-antigen.

It is found in the cell membrane. Receptor for a number of inflammatory CC-chemokines including CCL3/MIP-1-alpha, CCL4/MIP-1-beta and RANTES and subsequently transduces a signal by increasing the intracellular calcium ion level. May play a role in the control of granulocytic lineage proliferation or differentiation. Participates in T-lymphocyte migration to the infection site by acting as a chemotactic receptor. This Rhinopithecus bieti (Black snub-nosed monkey) protein is C-C chemokine receptor type 5 (CCR5).